A 376-amino-acid polypeptide reads, in one-letter code: Chaperone protein DnaJ 2 (376 aa).

The J domain maps to 5–70; sequence DYYEVLGVNR…QKRAAYDRYG (66 aa). Residues 135–213 form a CR-type zinc finger; it reads GADKTIRIPT…CGGAGRVKRQ (79 aa). Residues C148, C151, C165, C168, C187, C190, C201, and C204 each contribute to the Zn(2+) site. CXXCXGXG motif repeat units follow at residues 148 to 155, 165 to 172, 187 to 194, and 201 to 208; these read CETCHGSG, CPTCGGAG, CPKCHGTG, and CRDCGGAG.

It belongs to the DnaJ family. In terms of assembly, homodimer. It depends on Zn(2+) as a cofactor.

It localises to the cytoplasm. In terms of biological role, participates actively in the response to hyperosmotic and heat shock by preventing the aggregation of stress-denatured proteins and by disaggregating proteins, also in an autonomous, DnaK-independent fashion. Unfolded proteins bind initially to DnaJ; upon interaction with the DnaJ-bound protein, DnaK hydrolyzes its bound ATP, resulting in the formation of a stable complex. GrpE releases ADP from DnaK; ATP binding to DnaK triggers the release of the substrate protein, thus completing the reaction cycle. Several rounds of ATP-dependent interactions between DnaJ, DnaK and GrpE are required for fully efficient folding. Also involved, together with DnaK and GrpE, in the DNA replication of plasmids through activation of initiation proteins. The protein is Chaperone protein DnaJ 2 of Aromatoleum aromaticum (strain DSM 19018 / LMG 30748 / EbN1) (Azoarcus sp. (strain EbN1)).